Here is an 891-residue protein sequence, read N- to C-terminus: Alanine--tRNA ligase (891 aa).

Positions 564, 568, 678, and 682 each coordinate Zn(2+).

It belongs to the class-II aminoacyl-tRNA synthetase family. It depends on Zn(2+) as a cofactor.

The protein localises to the cytoplasm. The enzyme catalyses tRNA(Ala) + L-alanine + ATP = L-alanyl-tRNA(Ala) + AMP + diphosphate. Catalyzes the attachment of alanine to tRNA(Ala) in a two-step reaction: alanine is first activated by ATP to form Ala-AMP and then transferred to the acceptor end of tRNA(Ala). Also edits incorrectly charged Ser-tRNA(Ala) and Gly-tRNA(Ala) via its editing domain. The polypeptide is Alanine--tRNA ligase (Nitrobacter hamburgensis (strain DSM 10229 / NCIMB 13809 / X14)).